The primary structure comprises 263 residues: 3-methyl-2-oxobutanoate hydroxymethyltransferase (263 aa).

2 residues coordinate Mg(2+): Asp44 and Asp83. Residues Asp44–Ser45, Asp83, and Lys113 each bind 3-methyl-2-oxobutanoate. Glu115 contributes to the Mg(2+) binding site. Glu183 functions as the Proton acceptor in the catalytic mechanism.

The protein belongs to the PanB family. Homodecamer; pentamer of dimers. Mg(2+) serves as cofactor.

It is found in the cytoplasm. It carries out the reaction 3-methyl-2-oxobutanoate + (6R)-5,10-methylene-5,6,7,8-tetrahydrofolate + H2O = 2-dehydropantoate + (6S)-5,6,7,8-tetrahydrofolate. It participates in cofactor biosynthesis; (R)-pantothenate biosynthesis; (R)-pantoate from 3-methyl-2-oxobutanoate: step 1/2. In terms of biological role, catalyzes the reversible reaction in which hydroxymethyl group from 5,10-methylenetetrahydrofolate is transferred onto alpha-ketoisovalerate to form ketopantoate. This is 3-methyl-2-oxobutanoate hydroxymethyltransferase from Trichodesmium erythraeum (strain IMS101).